A 155-amino-acid polypeptide reads, in one-letter code: Aspartate carbamoyltransferase regulatory chain (155 aa).

Positions 113, 118, 139, and 142 each coordinate Zn(2+).

It belongs to the PyrI family. Contains catalytic and regulatory chains. Zn(2+) is required as a cofactor.

Involved in allosteric regulation of aspartate carbamoyltransferase. The sequence is that of Aspartate carbamoyltransferase regulatory chain from Methanospirillum hungatei JF-1 (strain ATCC 27890 / DSM 864 / NBRC 100397 / JF-1).